A 333-amino-acid polypeptide reads, in one-letter code: Ornithine carbamoyltransferase (333 aa).

Carbamoyl phosphate is bound by residues 57–60 (STRT), Q83, R107, and 134–137 (HPTQ). L-ornithine contacts are provided by residues N168, D232, and 236 to 237 (SM). Carbamoyl phosphate contacts are provided by residues 274 to 275 (CL) and R319.

It belongs to the aspartate/ornithine carbamoyltransferase superfamily. OTCase family.

Its subcellular location is the cytoplasm. It catalyses the reaction carbamoyl phosphate + L-ornithine = L-citrulline + phosphate + H(+). Its pathway is amino-acid biosynthesis; L-arginine biosynthesis; L-arginine from L-ornithine and carbamoyl phosphate: step 1/3. Reversibly catalyzes the transfer of the carbamoyl group from carbamoyl phosphate (CP) to the N(epsilon) atom of ornithine (ORN) to produce L-citrulline. This is Ornithine carbamoyltransferase from Photobacterium profundum (strain SS9).